A 211-amino-acid polypeptide reads, in one-letter code: Arginine exporter protein ArgO (211 aa).

Helical transmembrane passes span 1-21 (MISYYFQGFALGAAMILPLGP), 37-57 (LMIALLCALSDLVLISAGIFG), 68-88 (LLALVTWGGVAFLLWYGFGAL), 111-131 (IIATMLAVTWLNPHVYLDTFV), 147-167 (WFALGTISASFLWFFGLALLA), and 179-199 (AQRIINILVGVVMWLIAFQLA).

Belongs to the LysE/ArgO transporter (TC 2.A.75) family.

Its subcellular location is the cell inner membrane. It catalyses the reaction L-arginine(in) = L-arginine(out). In terms of biological role, involved in the export of arginine. Important to control the intracellular level of arginine and the correct balance between arginine and lysine. In Salmonella newport (strain SL254), this protein is Arginine exporter protein ArgO.